The primary structure comprises 540 residues: Mitochondrial distribution and morphology protein 34 (540 aa).

One can recognise an SMP-LTD domain in the interval Met-1–Gln-208. 2 disordered regions span residues Ala-26–Lys-51 and Arg-379–Leu-399. The segment covering Pro-35 to Ser-44 has biased composition (polar residues).

The protein belongs to the MDM34 family. As to quaternary structure, component of the ER-mitochondria encounter structure (ERMES) or MDM complex, composed of MMM1, MDM10, MDM12 and MDM34.

Its subcellular location is the mitochondrion outer membrane. Its function is as follows. Component of the ERMES/MDM complex, which serves as a molecular tether to connect the endoplasmic reticulum (ER) and mitochondria. Components of this complex are involved in the control of mitochondrial shape and protein biogenesis, and function in nonvesicular lipid trafficking between the ER and mitochondria. MDM34 is required for the interaction of the ER-resident membrane protein MMM1 and the outer mitochondrial membrane-resident beta-barrel protein MDM10. This is Mitochondrial distribution and morphology protein 34 from Kluyveromyces lactis (strain ATCC 8585 / CBS 2359 / DSM 70799 / NBRC 1267 / NRRL Y-1140 / WM37) (Yeast).